A 367-amino-acid chain; its full sequence is tRNA-specific 2-thiouridylase MnmA (367 aa).

ATP contacts are provided by residues 9 to 16 (GLSGGVDS) and M35. The segment at 95–97 (NPD) is interaction with target base in tRNA. C100 functions as the Nucleophile in the catalytic mechanism. C100 and C196 are disulfide-bonded. G124 is an ATP binding site. An interaction with tRNA region spans residues 146–148 (KDQ). C196 serves as the catalytic Cysteine persulfide intermediate. The interval 308-309 (RY) is interaction with tRNA.

It belongs to the MnmA/TRMU family.

The protein localises to the cytoplasm. It carries out the reaction S-sulfanyl-L-cysteinyl-[protein] + uridine(34) in tRNA + AH2 + ATP = 2-thiouridine(34) in tRNA + L-cysteinyl-[protein] + A + AMP + diphosphate + H(+). Its function is as follows. Catalyzes the 2-thiolation of uridine at the wobble position (U34) of tRNA, leading to the formation of s(2)U34. The chain is tRNA-specific 2-thiouridylase MnmA from Nitrosococcus oceani (strain ATCC 19707 / BCRC 17464 / JCM 30415 / NCIMB 11848 / C-107).